The following is a 145-amino-acid chain: Large ribosomal subunit protein uL13 (145 aa).

Positions Asp72–Gly91 are disordered.

This sequence belongs to the universal ribosomal protein uL13 family. In terms of assembly, part of the 50S ribosomal subunit.

Its function is as follows. This protein is one of the early assembly proteins of the 50S ribosomal subunit, although it is not seen to bind rRNA by itself. It is important during the early stages of 50S assembly. In Staphylococcus epidermidis (strain ATCC 12228 / FDA PCI 1200), this protein is Large ribosomal subunit protein uL13.